We begin with the raw amino-acid sequence, 462 residues long: ATP synthase subunit beta (462 aa).

151 to 158 (GGAGVGKT) is a binding site for ATP.

This sequence belongs to the ATPase alpha/beta chains family. As to quaternary structure, F-type ATPases have 2 components, CF(1) - the catalytic core - and CF(0) - the membrane proton channel. CF(1) has five subunits: alpha(3), beta(3), gamma(1), delta(1), epsilon(1). CF(0) has four main subunits: a(1), b(1), b'(1) and c(9-12).

The protein resides in the cell inner membrane. The enzyme catalyses ATP + H2O + 4 H(+)(in) = ADP + phosphate + 5 H(+)(out). Produces ATP from ADP in the presence of a proton gradient across the membrane. The catalytic sites are hosted primarily by the beta subunits. The polypeptide is ATP synthase subunit beta (Chlorobium phaeobacteroides (strain BS1)).